Reading from the N-terminus, the 331-residue chain is Cytosolic sulfotransferase 1 (331 aa).

Residue 74-79 (KSGTTW) participates in 3'-phosphoadenylyl sulfate binding. Catalysis depends on His-143, which acts as the Proton acceptor. Residues Arg-165, Ser-173, Tyr-231, and 297 to 299 (RKG) contribute to the 3'-phosphoadenylyl sulfate site.

Belongs to the sulfotransferase 1 family.

Its subcellular location is the cytoplasm. Its function is as follows. Sulfotransferase that utilizes 3'-phospho-5'-adenylyl sulfate (PAPS) as sulfonate donor. This chain is Cytosolic sulfotransferase 1 (SOT1), found in Arabidopsis thaliana (Mouse-ear cress).